Reading from the N-terminus, the 136-residue chain is Large ribosomal subunit protein uL16 (136 aa).

Belongs to the universal ribosomal protein uL16 family. In terms of assembly, part of the 50S ribosomal subunit.

In terms of biological role, binds 23S rRNA and is also seen to make contacts with the A and possibly P site tRNAs. This chain is Large ribosomal subunit protein uL16, found in Elusimicrobium minutum (strain Pei191).